The chain runs to 476 residues: Inosine-5'-monophosphate dehydrogenase (476 aa).

CBS domains lie at 93–151 (IIRD…VKDI) and 152–211 (MTKD…TRDE). NAD(+)-binding positions include aspartate 242 and 292-294 (GIG). K(+)-binding residues include glycine 294 and glycine 296. Serine 297 is an IMP binding site. Cysteine 299 is a binding site for K(+). Catalysis depends on cysteine 299, which acts as the Thioimidate intermediate. IMP is bound by residues 334–336 (DGG), 357–358 (GY), and 381–385 (YRGMG). The active-site Proton acceptor is the arginine 398. Glutamate 408 is a binding site for IMP. Glutamate 462 contributes to the K(+) binding site.

This sequence belongs to the IMPDH/GMPR family. As to quaternary structure, homotetramer. K(+) serves as cofactor.

It carries out the reaction IMP + NAD(+) + H2O = XMP + NADH + H(+). It functions in the pathway purine metabolism; XMP biosynthesis via de novo pathway; XMP from IMP: step 1/1. With respect to regulation, mycophenolic acid (MPA) is a non-competitive inhibitor that prevents formation of the closed enzyme conformation by binding to the same site as the amobile flap. In contrast, mizoribine monophosphate (MZP) is a competitive inhibitor that induces the closed conformation. MPA is a potent inhibitor of mammalian IMPDHs but a poor inhibitor of the bacterial enzymes. MZP is a more potent inhibitor of bacterial IMPDH. Catalyzes the conversion of inosine 5'-phosphate (IMP) to xanthosine 5'-phosphate (XMP), the first committed and rate-limiting step in the de novo synthesis of guanine nucleotides, and therefore plays an important role in the regulation of cell growth. This Korarchaeum cryptofilum (strain OPF8) protein is Inosine-5'-monophosphate dehydrogenase.